The chain runs to 307 residues: Serine/threonine-protein phosphatase 4 catalytic subunit B (307 aa).

Residues Asp54, His56, Asp82, and Asn114 each coordinate Mn(2+). The active-site Proton donor is the His115. Residues His164 and His238 each contribute to the Mn(2+) site. At Leu307 the chain carries Leucine methyl ester.

It belongs to the PPP phosphatase family. PP-4 (PP-X) subfamily. Serine/threonine-protein phosphatase 4 (PP4) occurs in different assemblies of the catalytic and one or more regulatory subunits. It depends on Mn(2+) as a cofactor.

It localises to the cytoplasm. The protein localises to the cytoskeleton. It is found in the microtubule organizing center. The protein resides in the centrosome. It catalyses the reaction O-phospho-L-seryl-[protein] + H2O = L-seryl-[protein] + phosphate. It carries out the reaction O-phospho-L-threonyl-[protein] + H2O = L-threonyl-[protein] + phosphate. Its function is as follows. Protein phosphatase that regulates many processes such as microtubule organization at centrosomes. The sequence is that of Serine/threonine-protein phosphatase 4 catalytic subunit B (ppp4cb) from Danio rerio (Zebrafish).